A 263-amino-acid chain; its full sequence is Phosphatidylglycerol--prolipoprotein diacylglyceryl transferase (263 aa).

The next 4 membrane-spanning stretches (helical) occupy residues Ile15–Ala35, Phe52–Gln72, Ile83–Val103, and Ala112–Ile132. Arg134 is an a 1,2-diacyl-sn-glycero-3-phospho-(1'-sn-glycerol) binding site. 3 helical membrane-spanning segments follow: residues Val170–Leu190, Gly200–Met220, and Phe227–Leu247.

Belongs to the Lgt family.

It is found in the cell membrane. It catalyses the reaction L-cysteinyl-[prolipoprotein] + a 1,2-diacyl-sn-glycero-3-phospho-(1'-sn-glycerol) = an S-1,2-diacyl-sn-glyceryl-L-cysteinyl-[prolipoprotein] + sn-glycerol 1-phosphate + H(+). It functions in the pathway protein modification; lipoprotein biosynthesis (diacylglyceryl transfer). Its function is as follows. Catalyzes the transfer of the diacylglyceryl group from phosphatidylglycerol to the sulfhydryl group of the N-terminal cysteine of a prolipoprotein, the first step in the formation of mature lipoproteins. This chain is Phosphatidylglycerol--prolipoprotein diacylglyceryl transferase, found in Streptococcus thermophilus (strain CNRZ 1066).